An 862-amino-acid chain; its full sequence is DNA mismatch repair protein MutS (862 aa).

An ATP-binding site is contributed by 608–615 (GPNMAGKS).

This sequence belongs to the DNA mismatch repair MutS family.

In terms of biological role, this protein is involved in the repair of mismatches in DNA. It is possible that it carries out the mismatch recognition step. This protein has a weak ATPase activity. This Borrelia garinii subsp. bavariensis (strain ATCC BAA-2496 / DSM 23469 / PBi) (Borreliella bavariensis) protein is DNA mismatch repair protein MutS.